The primary structure comprises 663 residues: Terreic acid cluster-specific transcription factor atF (663 aa).

The span at 1-20 (MFATFNSSMDNRSSANSPVA) shows a compositional bias: polar residues. 2 disordered regions span residues 1-28 (MFAT…PKRT) and 55-126 (TRGV…SPSQ). Residues 34 to 60 (CDWCRLNRVKCDDGQPCKNCRTRGVRC) constitute a DNA-binding region (zn(2)-C6 fungal-type). Positions 55 to 64 (TRGVRCRKGS) are enriched in basic residues. 2 stretches are compositionally biased toward low complexity: residues 73-88 (SSSA…QGAQ) and 105-125 (ATTS…PSPS).

The protein resides in the nucleus. Transcription factor that regulates the expression of the gene cluster that mediates the biosynthesis of terreic acid, a quinone epoxide inhibitor of Bruton's tyrosine kinase. In Aspergillus terreus (strain NIH 2624 / FGSC A1156), this protein is Terreic acid cluster-specific transcription factor atF.